The primary structure comprises 1247 residues: Probable phosphorylase b kinase regulatory subunit alpha (1247 aa).

Positions 853–883 (LKGLYEKACQQKLWGLVRHTAGMLGKRVEDL) are calmodulin-binding. Residues Ser-1030 and Ser-1033 each carry the phosphoserine modification. Residues 1052–1089 (DRQGQWLRRRRLDGALNRVPRDFYSRVWTVLEKCQGLA) form a calmodulin-binding region. Cys-1244 carries S-farnesyl cysteine lipidation.

This sequence belongs to the phosphorylase b kinase regulatory chain family. In terms of processing, although the final Cys may be farnesylated, the terminal tripeptide is probably not removed, and the C-terminus is not methylated.

The protein localises to the cell membrane. It participates in glycan biosynthesis; glycogen metabolism. In terms of biological role, phosphorylase b kinase catalyzes the phosphorylation of serine in certain substrates, including troponin I. The alpha chain may bind calmodulin. This chain is Probable phosphorylase b kinase regulatory subunit alpha, found in Drosophila melanogaster (Fruit fly).